The sequence spans 78 residues: Large ribosomal subunit protein bL28 (78 aa).

The protein belongs to the bacterial ribosomal protein bL28 family.

This is Large ribosomal subunit protein bL28 from Corynebacterium aurimucosum (strain ATCC 700975 / DSM 44827 / CIP 107346 / CN-1) (Corynebacterium nigricans).